The sequence spans 355 residues: MTKEKNVILTARDIVVEFDVRDKVLTAIRGVSLELVEGEVLALVGESGSGKSVLTKTFTGMLEENGRIAQGSIDYRGQDLTALSSHKDWEQIRGAKIATIFQDPMTSLDPIKTIGSQITEVIVKHQGKTAKEAKELAIDYMNKVGIPDADRRFNEYPFQYSGGMRQRIVIAIALACRPDVLICDEPTTALDVTIQAQIIDLLKSLQNEYHFTTIFITHDLGVVASIADKVAVMYAGEIVEYGTVEEVFYDPRHPYTWSLLSSLPQLADDKGDLYSIPGTPPSLYTDLKGDAFALRSDYAMQIDFEQKAPQFSVSETHWAKTWLLHEDAPKVEKPAVIANLHDKIREKMGFAHLAD.

One can recognise an ABC transporter domain in the interval 9 to 260; that stretch reads LTARDIVVEF…PRHPYTWSLL (252 aa). 45–52 provides a ligand contact to ATP; the sequence is GESGSGKS.

The protein belongs to the ABC transporter superfamily.

It is found in the cell membrane. Part of the binding-protein-dependent transport system for oligopeptides. Probably responsible for energy coupling to the transport system. The sequence is that of Oligopeptide transport ATP-binding protein AmiE (amiE) from Streptococcus pneumoniae serotype 4 (strain ATCC BAA-334 / TIGR4).